We begin with the raw amino-acid sequence, 245 residues long: Cell division protein ZapD (245 aa).

This sequence belongs to the ZapD family. In terms of assembly, interacts with FtsZ.

The protein resides in the cytoplasm. Cell division factor that enhances FtsZ-ring assembly. Directly interacts with FtsZ and promotes bundling of FtsZ protofilaments, with a reduction in FtsZ GTPase activity. This is Cell division protein ZapD from Photobacterium profundum (strain SS9).